The primary structure comprises 809 residues: Lon protease (809 aa).

The 197-residue stretch at 20–216 (LPLLALRDVV…ELMNYLMNQS (197 aa)) folds into the Lon N-terminal domain. Position 369–376 (369–376 (GPPGVGKT)) interacts with ATP. Residues 606-787 (EAQVGRVNGL…DEILPLALTS (182 aa)) enclose the Lon proteolytic domain. Catalysis depends on residues Ser-693 and Lys-736.

This sequence belongs to the peptidase S16 family. Homohexamer. Organized in a ring with a central cavity.

It is found in the cytoplasm. It carries out the reaction Hydrolysis of proteins in presence of ATP.. Its function is as follows. ATP-dependent serine protease that mediates the selective degradation of mutant and abnormal proteins as well as certain short-lived regulatory proteins. Required for cellular homeostasis and for survival from DNA damage and developmental changes induced by stress. Degrades polypeptides processively to yield small peptide fragments that are 5 to 10 amino acids long. Binds to DNA in a double-stranded, site-specific manner. This is Lon protease from Acinetobacter baumannii (strain AB307-0294).